A 294-amino-acid polypeptide reads, in one-letter code: Oligopeptide transport system permease protein OppC (294 aa).

6 helical membrane passes run 27–47 (MISTIFLVAVFLIVYIYSMFL), 94–114 (IAFAVTLITLVVGNILGVITG), 127–147 (FTDFVMILPSMMIIIVFVTII), 151–171 (NSWSLIGIISIFSWIGTTRLI), 202–224 (IWPNLSTLVIAEATLVFAGNIGL), and 260–280 (WTWVPATVVILIVVLAIIFIG). Positions 88-280 (ARNSFNIAFA…IVVLAIIFIG (193 aa)) constitute an ABC transmembrane type-1 domain.

It belongs to the binding-protein-dependent transport system permease family. OppBC subfamily. In terms of assembly, the complex is composed of two ATP-binding proteins (OppD and OppF), two transmembrane proteins (OppB and OppC) and a solute-binding protein (OppA).

It localises to the cell membrane. In terms of biological role, part of the ABC transporter complex OppABCDF involved in the uptake of oligopeptides. Probably responsible for the translocation of the substrate across the membrane. Essential for uptake of peptides larger than three amino acids and for growth in milk. This is Oligopeptide transport system permease protein OppC (oppC) from Lactococcus lactis subsp. lactis (strain IL1403) (Streptococcus lactis).